Reading from the N-terminus, the 600-residue chain is Glutamine--fructose-6-phosphate aminotransferase [isomerizing] (600 aa).

Residue cysteine 2 is the Nucleophile; for GATase activity of the active site. The 216-residue stretch at 2-217 (CGIVGYIGQL…DKEMVIVTDD (216 aa)) folds into the Glutamine amidotransferase type-2 domain. SIS domains are found at residues 283–422 (IAAA…KNGI) and 452–590 (IARE…VDKP). Lysine 595 functions as the For Fru-6P isomerization activity in the catalytic mechanism.

In terms of assembly, homodimer.

It localises to the cytoplasm. It carries out the reaction D-fructose 6-phosphate + L-glutamine = D-glucosamine 6-phosphate + L-glutamate. Functionally, catalyzes the first step in hexosamine metabolism, converting fructose-6P into glucosamine-6P using glutamine as a nitrogen source. The polypeptide is Glutamine--fructose-6-phosphate aminotransferase [isomerizing] (glmS) (Bacillus spizizenii (strain ATCC 23059 / NRRL B-14472 / W23) (Bacillus subtilis subsp. spizizenii)).